A 129-amino-acid polypeptide reads, in one-letter code: Lysozyme C (129 aa).

A C-type lysozyme domain is found at 1–129; the sequence is KVFSKCELAH…LSEYLASCNL (129 aa). Cystine bridges form between C6-C127, C30-C115, C65-C80, and C76-C94. Active-site residues include E35 and D53. Ca(2+)-binding residues include K82, D85, N87, D90, and D91.

This sequence belongs to the glycosyl hydrolase 22 family. In terms of assembly, monomer. Ca(2+) is required as a cofactor.

It carries out the reaction Hydrolysis of (1-&gt;4)-beta-linkages between N-acetylmuramic acid and N-acetyl-D-glucosamine residues in a peptidoglycan and between N-acetyl-D-glucosamine residues in chitodextrins.. In terms of biological role, lysozymes have primarily a bacteriolytic function; those in tissues and body fluids are associated with the monocyte-macrophage system and enhance the activity of immunoagents. In Equus asinus (Donkey), this protein is Lysozyme C (LYZ).